The sequence spans 381 residues: Glycerate 2-kinase (381 aa).

It belongs to the glycerate kinase type-1 family.

It carries out the reaction (R)-glycerate + ATP = (2R)-2-phosphoglycerate + ADP + H(+). Functionally, catalyzes the transfer of the phosphate group from adenosine triphosphate (ATP) to (R)-glycerate to form (2R)-2-phosphoglycerate, an enzymatic step in (L)-glucarate/galactarate catabolic pathway. The polypeptide is Glycerate 2-kinase (garK) (Escherichia coli (strain K12)).